Here is a 469-residue protein sequence, read N- to C-terminus: Bifunctional protein GlmU (469 aa).

The pyrophosphorylase stretch occupies residues M1–R237. UDP-N-acetyl-alpha-D-glucosamine is bound by residues L12–G15, K26, Q78, G83–T84, S105–D107, G144, E162, N177, and N235. D107 contacts Mg(2+). N235 lines the Mg(2+) pocket. The linker stretch occupies residues Q238 to A258. Positions G259–K469 are N-acetyltransferase. Positions 341 and 359 each coordinate UDP-N-acetyl-alpha-D-glucosamine. H371 (proton acceptor) is an active-site residue. 2 residues coordinate UDP-N-acetyl-alpha-D-glucosamine: Y374 and N385. Residues A388, N394–Y395, S413, A431, and R448 each bind acetyl-CoA.

In the N-terminal section; belongs to the N-acetylglucosamine-1-phosphate uridyltransferase family. The protein in the C-terminal section; belongs to the transferase hexapeptide repeat family. As to quaternary structure, homotrimer. Mg(2+) is required as a cofactor.

It is found in the cytoplasm. It carries out the reaction alpha-D-glucosamine 1-phosphate + acetyl-CoA = N-acetyl-alpha-D-glucosamine 1-phosphate + CoA + H(+). The enzyme catalyses N-acetyl-alpha-D-glucosamine 1-phosphate + UTP + H(+) = UDP-N-acetyl-alpha-D-glucosamine + diphosphate. Its pathway is nucleotide-sugar biosynthesis; UDP-N-acetyl-alpha-D-glucosamine biosynthesis; N-acetyl-alpha-D-glucosamine 1-phosphate from alpha-D-glucosamine 6-phosphate (route II): step 2/2. It participates in nucleotide-sugar biosynthesis; UDP-N-acetyl-alpha-D-glucosamine biosynthesis; UDP-N-acetyl-alpha-D-glucosamine from N-acetyl-alpha-D-glucosamine 1-phosphate: step 1/1. It functions in the pathway bacterial outer membrane biogenesis; LPS lipid A biosynthesis. Its function is as follows. Catalyzes the last two sequential reactions in the de novo biosynthetic pathway for UDP-N-acetylglucosamine (UDP-GlcNAc). The C-terminal domain catalyzes the transfer of acetyl group from acetyl coenzyme A to glucosamine-1-phosphate (GlcN-1-P) to produce N-acetylglucosamine-1-phosphate (GlcNAc-1-P), which is converted into UDP-GlcNAc by the transfer of uridine 5-monophosphate (from uridine 5-triphosphate), a reaction catalyzed by the N-terminal domain. The protein is Bifunctional protein GlmU of Koribacter versatilis (strain Ellin345).